A 438-amino-acid chain; its full sequence is Protein maelstrom 2 (438 aa).

Positions 2 to 69 form a DNA-binding region, HMG box; it reads APKKRNGFMT…LERTAKKERL (68 aa). The tract at residues 374 to 438 is disordered; it reads KEMGSRDLSP…NMGAGKKIAR (65 aa). Residues 381–391 are compositionally biased toward polar residues; the sequence is LSPSSSHQSVS.

Belongs to the maelstrom family.

The protein resides in the cytoplasm. It localises to the nucleus. Functionally, involved both in the piRNA and miRNA metabolic processes. As a component of the meiotic nuage, plays a central role during oogenesis by repressing transposable elements and preventing their mobilization, which is essential for the germline integrity. Repression of transposable elements is mediated via the piRNA metabolic process, which mediates the repression of transposable elements during meiosis by forming complexes composed of piRNAs and Piwi proteins and governs the repression of transposons. As a nuclear component, it is required for proper differentiation in the germline stem cell (GSC) lineage by repressing microRNA-7 (miR-7), thereby acting as an indirect regulator of bag-of-marbles (Bam). Acts by binding to the promoter of miR-7 gene and repressing its expression; miR-7 repression alleviates the Bam repression by miR-7, thereby allowing differentiation in the germline stem cell (GSC) lineage. This is Protein maelstrom 2 (mael2) from Drosophila persimilis (Fruit fly).